A 112-amino-acid polypeptide reads, in one-letter code: Small ribosomal subunit protein eS24 (112 aa).

A disordered region spans residues 88–112; the sequence is RGMAGEEEGNADAQDAPSGDAAEAS.

This sequence belongs to the eukaryotic ribosomal protein eS24 family.

The protein is Small ribosomal subunit protein eS24 of Methanospirillum hungatei JF-1 (strain ATCC 27890 / DSM 864 / NBRC 100397 / JF-1).